A 468-amino-acid polypeptide reads, in one-letter code: Glutamate--tRNA ligase (468 aa).

Residues 8–18 carry the 'HIGH' region motif; it reads PSPTGFLHVGG. Zn(2+) is bound by residues cysteine 97, cysteine 99, cysteine 124, and aspartate 126. A 'KMSKS' region motif is present at residues 236-240; sequence KLSKR. Residue lysine 239 participates in ATP binding.

It belongs to the class-I aminoacyl-tRNA synthetase family. Glutamate--tRNA ligase type 1 subfamily. In terms of assembly, monomer. Zn(2+) serves as cofactor.

It is found in the cytoplasm. The catalysed reaction is tRNA(Glu) + L-glutamate + ATP = L-glutamyl-tRNA(Glu) + AMP + diphosphate. In terms of biological role, catalyzes the attachment of glutamate to tRNA(Glu) in a two-step reaction: glutamate is first activated by ATP to form Glu-AMP and then transferred to the acceptor end of tRNA(Glu). The sequence is that of Glutamate--tRNA ligase from Francisella tularensis subsp. holarctica (strain FTNF002-00 / FTA).